Consider the following 281-residue polypeptide: Pantothenate synthetase (281 aa).

Residue 30 to 37 (MGYLHEGH) coordinates ATP. Histidine 37 functions as the Proton donor in the catalytic mechanism. Glutamine 61 provides a ligand contact to (R)-pantoate. Glutamine 61 contributes to the beta-alanine binding site. Residue 147-150 (GEKD) coordinates ATP. Residue glutamine 153 coordinates (R)-pantoate. ATP is bound by residues isoleucine 176 and 184-187 (KSSR).

It belongs to the pantothenate synthetase family. As to quaternary structure, homodimer.

The protein resides in the cytoplasm. It carries out the reaction (R)-pantoate + beta-alanine + ATP = (R)-pantothenate + AMP + diphosphate + H(+). The protein operates within cofactor biosynthesis; (R)-pantothenate biosynthesis; (R)-pantothenate from (R)-pantoate and beta-alanine: step 1/1. Functionally, catalyzes the condensation of pantoate with beta-alanine in an ATP-dependent reaction via a pantoyl-adenylate intermediate. This is Pantothenate synthetase from Clostridium botulinum (strain Okra / Type B1).